The primary structure comprises 366 residues: Homeobox-leucine zipper protein HOX21 (366 aa).

Disordered stretches follow at residues 25 to 81 and 94 to 132; these read QQAA…SSAQ and MLGKRPMSYGDGGGGGDEVNGGGEDELSDDGSQAGEKKR. The segment covering 36-48 has biased composition (basic residues); sequence HHHHHHHGHHGHH. Pro residues predominate over residues 62–74; that stretch reads GPPPPPPPHPHNP. A compositionally biased stretch (gly residues) spans 103-115; it reads GDGGGGGDEVNGG. The segment at residues 127 to 186 is a DNA-binding region (homeobox); that stretch reads AGEKKRRLNVEQVRTLEKNFELGNKLEPERKMQLARALGLQPRQVAIWFQNRRARWKTKQ. A leucine-zipper region spans residues 185–229; it reads KQLEKDYDALKRQLDAVKAENDALLNHNKKLQAEIVALKGREAAS. Disordered regions lie at residues 239-287 and 312-336; these read EASC…GGGG and LHSSSGGAGGPKMEHHGGGGNVQAA. Polar residues predominate over residues 240–252; it reads ASCSNRSENSSEI.

Belongs to the HD-ZIP homeobox family. Class I subfamily. In terms of tissue distribution, expressed in seedlings, roots, stems, leaf blades and panicles.

The protein localises to the nucleus. Its function is as follows. Probable transcription factor. The chain is Homeobox-leucine zipper protein HOX21 (HOX21) from Oryza sativa subsp. japonica (Rice).